A 2339-amino-acid polypeptide reads, in one-letter code: Voltage-dependent N-type calcium channel subunit alpha-1B (2339 aa).

A disordered region spans residues 1–37 (MVRFGDELGGRYGGPGGGERARGGGAGGAGGPGPGGL). Residues 1-90 (MVRFGDELGG…DNVVRKYAKR (90 aa)) lie on the Cytoplasmic side of the membrane. Over residues 10–37 (GRYGGPGGGERARGGGAGGAGGPGPGGL) the composition is skewed to gly residues. Arg-22 is modified (omega-N-methylarginine). An I repeat occupies 82 to 359 (NVVRKYAKRI…LVLGVLSGEF (278 aa)). Residues 91–114 (ITEWPPFEYMILATIIANCIVLAL) form a helical membrane-spanning segment. The Extracellular portion of the chain corresponds to 115–131 (EQHLPDGDKTPMSERLD). A helical transmembrane segment spans residues 132–152 (DTEPYFIGIFCFEAGIKIIAL). The Cytoplasmic segment spans residues 153–163 (GFVFHKGSYLR). A helical transmembrane segment spans residues 164–182 (NGWNVMDFVVVLTGILATA). At 183-187 (GTDFD) the chain is on the extracellular side. A helical transmembrane segment spans residues 188-211 (LRTLRAVRVLRPLKLVSGIPSLQV). Topologically, residues 212–221 (VLKSIMKAMV) are cytoplasmic. Residues 222-244 (PLLQIGLLLFFAILMFAIIGLEF) traverse the membrane as a helical segment. Residues 245–331 (YMGKFHKACF…NTNDAAGNTW (87 aa)) lie on the Extracellular side of the membrane. Asn-256 carries N-linked (GlcNAc...) asparagine glycosylation. Residues 332 to 356 (NWLYFIPLIIIGSFFMLNLVLGVLS) form a helical membrane-spanning segment. Over 357–482 (GEFAKERERV…FFIRRMVKAQ (126 aa)) the chain is Cytoplasmic. Positions 379–396 (QQIERELNGYLEWIFKAE) are binding to the beta subunit. Position 411 is a phosphoserine (Ser-411). An ATP-binding site is contributed by 451-458 (ASLKSGKT). Residues 468-712 (EKMFRFFIRR…VFLAIAVDNL (245 aa)) form an II repeat. Residues 483 to 501 (SFYWVVLCVVALNTLCVAM) form a helical membrane-spanning segment. Over 502 to 511 (VHYNQPRRLT) the chain is Extracellular. The helical transmembrane segment at 512-534 (TTLYFAEFVFLGLFLTEMSLKMY) threads the bilayer. At 535 to 544 (GLGPRSYFRS) the chain is on the cytoplasmic side. Ser-544 lines the a 1,2-diacyl-sn-glycero-3-phospho-(1D-myo-inositol-4,5-bisphosphate) pocket. Residues 545–566 (SFNCFDFGVIVGSVFEVVWAAI) traverse the membrane as a helical segment. The Extracellular segment spans residues 567–573 (KPGSSFG). A helical membrane pass occupies residues 574–586 (ISVLRALRLLRIF). 2 residues coordinate a 1,2-diacyl-sn-glycero-3-phospho-(1D-myo-inositol-4,5-bisphosphate): Arg-584 and Lys-587. Residues 587–604 (KVTKYWSSLRNLVVSLLN) are Cytoplasmic-facing. The chain crosses the membrane as a helical span at residues 605–630 (SMKSIISLLFLLFLFIVVFALLGMQL). The Extracellular portion of the chain corresponds to 631–682 (FGGQFNFQDETPTTNFDTFPAAILTVFQILTGEDWNAVMYHGIESQGGVSKG). The helical transmembrane segment at 683–709 (MFSSFYFIVLTLFGNYTLLNVFLAIAV) threads the bilayer. The Cytoplasmic portion of the chain corresponds to 710 to 1151 (DNLANAQELT…FCHYIVTMRY (442 aa)). Phosphoserine occurs at positions 745, 748, and 783. 4 stretches are compositionally biased toward basic and acidic residues: residues 816–826 (PLVVELGRDGA), 857–886 (KDKT…EERP), 922–932 (GSPEEAAEREP), and 965–976 (GPREAESGEEPA). 2 disordered regions span residues 816–1038 (PLVV…VTVG) and 1054–1076 (QPED…DPNT). Residues 977–986 (RRHRARHKAQ) are compositionally biased toward basic residues. Over residues 990–1029 (EAVEKETTEKEATEKEAEIVEADKEKELRNHQPREPHCDL) the composition is skewed to basic and acidic residues. Phosphoserine is present on Ser-1069. The III repeat unit spans residues 1137–1419 (NLLRRFCHYI…IFVALIIITF (283 aa)). A helical membrane pass occupies residues 1152 to 1170 (FEVVILVVIALSSIALAAE). At 1171-1178 (DPVRTDSP) the chain is on the extracellular side. The chain crosses the membrane as a helical span at residues 1179–1203 (RNNALKYLDYIFTGVFTFEMVIKMI). Topologically, residues 1204–1217 (DLGLLLHPGAYFRD) are cytoplasmic. The chain crosses the membrane as a helical span at residues 1218–1238 (LWNILDFIVVSGALVAFAFSG). The Extracellular portion of the chain corresponds to 1239 to 1244 (SKGKDI). A helical membrane pass occupies residues 1245–1265 (NTIKSLRVLRVLRPLKTIKRL). At 1266 to 1283 (PKLKAVFDCVVNSLKNVL) the chain is on the cytoplasmic side. Residues 1284–1303 (NILIVYMLFMFIFAVIAVQL) form a helical membrane-spanning segment. Over 1304-1390 (FKGKFFYCTD…EQGPSPGYRM (87 aa)) the chain is Extracellular. Residues 1391–1416 (ELSIFYVVYFVVFPFFFVNIFVALII) traverse the membrane as a helical segment. Residues 1417–1471 (ITFQEQGDKVMSECSLEKNERACIDFAISAKPLTRYMPQNRQSFQYKTWTFVVSP) are Cytoplasmic-facing. The stretch at 1456 to 1711 (NRQSFQYKTW…LFVAVIMDNF (256 aa)) is one IV repeat. Residues 1472–1490 (PFEYFIMAMIALNTVVLMM) traverse the membrane as a helical segment. At 1491 to 1498 (KFYDAPYE) the chain is on the extracellular side. A helical membrane pass occupies residues 1499 to 1523 (YELMLKCLNIVFTSMFSMECVLKII). The Cytoplasmic portion of the chain corresponds to 1524 to 1533 (AFGVLNYFRD). A helical transmembrane segment spans residues 1534 to 1555 (AWNVFDFVTVLGSITDILVTEI). Topologically, residues 1556-1563 (AETNNFIN) are extracellular. The N-linked (GlcNAc...) asparagine glycan is linked to Asn-1563. A helical membrane pass occupies residues 1564 to 1582 (LSFLRLFRAARLIKLLRQG). Over 1583–1601 (YTIRILLWTFVQSFKALPY) the chain is Cytoplasmic. A helical membrane pass occupies residues 1602 to 1621 (VCLLIAMLFFIYAIIGMQVF). The Extracellular segment spans residues 1622–1683 (GNIALDDDTS…ANATECGSDF (62 aa)). Asn-1675 carries N-linked (GlcNAc...) asparagine glycosylation. Residues 1684–1707 (AYFYFVSFIFLCSFLMLNLFVAVI) form a helical membrane-spanning segment. The Cytoplasmic segment spans residues 1708-2339 (MDNFEYLTRD…YHHPDQDHWC (632 aa)). Residues 1724–1759 (HHLDEFIRVWAEYDPAACGRISYNDMFEMLKHMSPP) form the EF-hand domain. 3 residues coordinate Ca(2+): Asp-1737, Arg-1743, and Asp-1748. The span at 1916-1931 (SSTSLSNGGAIQNQES) shows a compositional bias: polar residues. 2 disordered regions span residues 1916–1968 (SSTS…VGRS) and 1981–2206 (TRRG…YKTA). Basic and acidic residues predominate over residues 1946-1960 (DAPHEARPPLERGHS). The segment covering 2049 to 2063 (SHHHHHRCHRRRDRK) has biased composition (basic residues). Position 2066 is a phosphoserine (Ser-2066). Residues 2098-2116 (CRRERERRQERGRSQERRQ) are compositionally biased toward basic and acidic residues. The span at 2143 to 2153 (PSLSSHPTSPT) shows a compositional bias: low complexity. Positions 2164–2180 (GSGSVNGSPLLSTSGAS) are enriched in polar residues. A phosphoserine mark is found at Ser-2224, Ser-2233, and Ser-2256.

It belongs to the calcium channel alpha-1 subunit (TC 1.A.1.11) family. CACNA1B subfamily. In terms of assembly, multisubunit complex consisting of alpha-1, alpha-2, beta and delta subunits in a 1:1:1:1 ratio. The channel activity is directed by the pore-forming and voltage-sensitive alpha-1 subunit. In many cases, this subunit is sufficient to generate voltage-sensitive calcium channel activity. The auxiliary subunits beta and alpha-2/delta linked by a disulfide bridge regulate the channel activity. Interacts with RIMS1. Interacts with FMR1 (via C-terminus); this interaction induces a decrease in the number of presynaptic functional CACNA1B channels at the cell surface. Post-translationally, phosphorylated in vitro by CaM-kinase II, PKA, PKC and CGPK. As to expression, isoform Alpha-1b-1 and isoform Alpha-1b-2 are expressed in the central nervous system, but not in skeletal muscle or aorta. Expressed in the cerebral white matter, cortex, hippocampus, basal ganglia, and cerebellum.

It localises to the membrane. The catalysed reaction is Ca(2+)(in) = Ca(2+)(out). Is specifically blocked by omega-conotoxin GVIA. Is specifically blocked by omega-conotoxin MVIIA (ziconotide). Is insensitive to dihydropyridines (DHP). With respect to regulation, is specifically blocked by omega-conotoxin MVIIA (ziconotide). Is insensitive to dihydropyridines (DHP). Functionally, voltage-sensitive calcium channels (VSCC) mediate the entry of calcium ions into excitable cells and are also involved in a variety of calcium-dependent processes, including muscle contraction, hormone or neurotransmitter release, gene expression, cell motility, cell division and cell death. This alpha-1B subunit gives rise to N-type calcium currents. N-type calcium channels belong to the 'high-voltage activated' (HVA) group. They are involved in pain signaling. Calcium channels containing alpha-1B subunit may play a role in directed migration of immature neurons. Mediates Ca(2+) release probability at hippocampal neuronal soma and synaptic terminals. In terms of biological role, voltage-sensitive calcium channels (VSCC) mediate the entry of calcium ions into excitable cells and are also involved in a variety of calcium-dependent processes, including muscle contraction, hormone or neurotransmitter release, gene expression, cell motility, cell division and cell death. This alpha-1B subunit gives rise to N-type calcium currents. The sequence is that of Voltage-dependent N-type calcium channel subunit alpha-1B (CACNA1B) from Homo sapiens (Human).